Here is a 642-residue protein sequence, read N- to C-terminus: Chaperone protein DnaK (642 aa).

A Phosphothreonine; by autocatalysis modification is found at T196. A compositionally biased stretch (polar residues) spans 593–603 (STMYQTPSGDT). A disordered region spans residues 593–642 (STMYQTPSGDTPPSEPETGASEESKGGDKTQGDGEVDAEYEVIDGNDKDK). A compositionally biased stretch (basic and acidic residues) spans 614–624 (EESKGGDKTQG). The span at 626–636 (GEVDAEYEVID) shows a compositional bias: acidic residues.

This sequence belongs to the heat shock protein 70 family.

Functionally, acts as a chaperone. This chain is Chaperone protein DnaK, found in Chlorobium phaeobacteroides (strain BS1).